A 158-amino-acid polypeptide reads, in one-letter code: NAD(P)H-quinone oxidoreductase subunit J, chloroplastic (158 aa).

This sequence belongs to the complex I 30 kDa subunit family. As to quaternary structure, NDH is composed of at least 16 different subunits, 5 of which are encoded in the nucleus.

The protein resides in the plastid. Its subcellular location is the chloroplast thylakoid membrane. The enzyme catalyses a plastoquinone + NADH + (n+1) H(+)(in) = a plastoquinol + NAD(+) + n H(+)(out). It catalyses the reaction a plastoquinone + NADPH + (n+1) H(+)(in) = a plastoquinol + NADP(+) + n H(+)(out). In terms of biological role, NDH shuttles electrons from NAD(P)H:plastoquinone, via FMN and iron-sulfur (Fe-S) centers, to quinones in the photosynthetic chain and possibly in a chloroplast respiratory chain. The immediate electron acceptor for the enzyme in this species is believed to be plastoquinone. Couples the redox reaction to proton translocation, and thus conserves the redox energy in a proton gradient. This Angiopteris evecta (Mule's foot fern) protein is NAD(P)H-quinone oxidoreductase subunit J, chloroplastic.